A 121-amino-acid polypeptide reads, in one-letter code: Ribulose bisphosphate carboxylase small subunit (121 aa).

Belongs to the RuBisCO small chain family. In terms of assembly, heterohexadecamer of 8 large and 8 small subunits.

Functionally, ruBisCO catalyzes two reactions: the carboxylation of D-ribulose 1,5-bisphosphate, the primary event in carbon dioxide fixation, as well as the oxidative fragmentation of the pentose substrate. Both reactions occur simultaneously and in competition at the same active site. Although the small subunit is not catalytic it is essential for maximal activity. The protein is Ribulose bisphosphate carboxylase small subunit of Alvinoconcha hessleri symbiotic bacterium.